The following is a 687-amino-acid chain: Homoaconitase, mitochondrial (687 aa).

The N-terminal 18 residues, 1–18 (MFAFRNRAVTQTLLVRRY), are a transit peptide targeting the mitochondrion. [4Fe-4S] cluster is bound by residues C340, C400, and C403. Residues 481-490 (EAEADAEAAE) are compositionally biased toward acidic residues. The tract at residues 481-500 (EAEADAEAAESDPAPSGGVL) is disordered.

This sequence belongs to the aconitase/IPM isomerase family. [4Fe-4S] cluster is required as a cofactor.

It is found in the mitochondrion. The catalysed reaction is (2R,3S)-homoisocitrate = cis-homoaconitate + H2O. Its pathway is amino-acid biosynthesis; L-lysine biosynthesis via AAA pathway; L-alpha-aminoadipate from 2-oxoglutarate: step 3/5. Catalyzes the reversible hydration of cis-homoaconitate to (2R,3S)-homoisocitrate, a step in the alpha-aminoadipate pathway for lysine biosynthesis. The sequence is that of Homoaconitase, mitochondrial (LYS4) from Yarrowia lipolytica (strain CLIB 122 / E 150) (Yeast).